A 100-amino-acid chain; its full sequence is NADH-quinone oxidoreductase subunit K (100 aa).

Helical transmembrane passes span 4 to 24 (LQHGLILAAILFVLGLTGLII), 29 to 49 (LFMLIGLEVMINAAALAFVVV), and 60 to 80 (VMFILAISLAAAEASIGLALL).

This sequence belongs to the complex I subunit 4L family. In terms of assembly, NDH-1 is composed of 13 different subunits. Subunits NuoA, H, J, K, L, M, N constitute the membrane sector of the complex.

It is found in the cell inner membrane. It catalyses the reaction a quinone + NADH + 5 H(+)(in) = a quinol + NAD(+) + 4 H(+)(out). NDH-1 shuttles electrons from NADH, via FMN and iron-sulfur (Fe-S) centers, to quinones in the respiratory chain. The immediate electron acceptor for the enzyme in this species is believed to be ubiquinone. Couples the redox reaction to proton translocation (for every two electrons transferred, four hydrogen ions are translocated across the cytoplasmic membrane), and thus conserves the redox energy in a proton gradient. This is NADH-quinone oxidoreductase subunit K from Photorhabdus laumondii subsp. laumondii (strain DSM 15139 / CIP 105565 / TT01) (Photorhabdus luminescens subsp. laumondii).